Reading from the N-terminus, the 701-residue chain is Long chain acyl-CoA synthetase 6, peroxisomal (701 aa).

A propeptide spans 1 to 38 (MDSSSSSSSAAARRRINAIHSHLVTSSRSSPLLRSNPT) (removed in mature form). Residues 15-23 (RINAIHSHL) carry the Microbody targeting signal motif. 266-277 (ICYTSGTTGTPK) lines the ATP pocket. A fatty acid-binding region spans residues 526-550 (DGWLHTGDIGLWLPGGRLKIIDRKK).

This sequence belongs to the ATP-dependent AMP-binding enzyme family. The cofactor is Mg(2+). Expressed in roots, stems, leaves flowers and germinating seedling. Preferentially expressed in seeds and senescent leaves.

It is found in the peroxisome. It localises to the glyoxysome membrane. It catalyses the reaction a long-chain fatty acid + ATP + CoA = a long-chain fatty acyl-CoA + AMP + diphosphate. The enzyme catalyses tetradecanoate + ATP + CoA = tetradecanoyl-CoA + AMP + diphosphate. It carries out the reaction hexadecanoate + ATP + CoA = hexadecanoyl-CoA + AMP + diphosphate. The catalysed reaction is (9Z)-octadecenoate + ATP + CoA = (9Z)-octadecenoyl-CoA + AMP + diphosphate. It catalyses the reaction (9Z,12Z)-octadecadienoate + ATP + CoA = (9Z,12Z)-octadecadienoyl-CoA + AMP + diphosphate. The enzyme catalyses (9Z,12Z,15Z)-octadecatrienoate + ATP + CoA = (9Z,12Z,15Z)-octadecatrienoyl-CoA + AMP + diphosphate. It functions in the pathway lipid metabolism; fatty acid metabolism. Activation of long-chain fatty acids for both synthesis of cellular lipids, and degradation via beta-oxidation. Preferentially uses palmitate, palmitoleate, oleate, linoleate and eicosenoate as substrates. Can use myristate and linolenate as substrates. May play a regulatory role both in fatty acid import into glyoxysomes and in fatty acid beta-oxidation. Functions redundantly with LACS7 in lipid mobilization for beta-oxidation during seed germination, which is essential for postgerminative growth and seedling establishment. This chain is Long chain acyl-CoA synthetase 6, peroxisomal, found in Arabidopsis thaliana (Mouse-ear cress).